A 357-amino-acid chain; its full sequence is Protein-L-isoaspartate O-methyltransferase domain-containing protein 1 (357 aa).

G2 carries the N-myristoyl glycine lipid modification. S64 is a catalytic residue. 3 adoMet binding motif regions span residues 85 to 94, 160 to 164, and 181 to 191; these read LNLGSGTGYL, YDRIY, and LKVGGILVMPI. Residues 240–250 form a BC-box region; sequence VRNLQDLARIY. The tract at residues 299–333 is disordered; it reads PLDSEEDEKMEEDNKEEEEKDHNEAMKPEEPPQNL. Residues 301-317 show a composition bias toward acidic residues; the sequence is DSEEDEKMEEDNKEEEE. The span at 318 to 333 shows a compositional bias: basic and acidic residues; that stretch reads KDHNEAMKPEEPPQNL. A CUL-box region spans residues 341–344; sequence LPLP.

The protein belongs to the methyltransferase superfamily. L-isoaspartyl/D-aspartyl protein methyltransferase family. In terms of assembly, component of the probable ECS(PCMTD1) E3 ubiquitin-protein ligase complex, at least composed of CUL5, ELOB, ELOC, RBX2 and PCMTD1. Interacts (via the BC-box) with ELOB and ELOC; the interaction is direct and stabilizes PCMTD1.

It localises to the cytoplasm. Its subcellular location is the membrane. Functionally, substrate recognition component of an ECS (Elongin BC-CUL5-SOCS-box protein) E3 ubiquitin ligase complex which mediates the ubiquitination and subsequent proteasomal degradation of target proteins. Specifically binds to the methyltransferase cofactor S-adenosylmethionine (AdoMet) via the N-terminal AdoMet binding motif, but does not display methyltransferase activity. May provide an alternate maintenance pathway for modified proteins by acting as a damage-specific E3 ubiquitin ligase adaptor protein. The protein is Protein-L-isoaspartate O-methyltransferase domain-containing protein 1 of Homo sapiens (Human).